Reading from the N-terminus, the 472-residue chain is tRNA-2-methylthio-N(6)-dimethylallyladenosine synthase (472 aa).

The MTTase N-terminal domain maps to 22-142; sequence RKVFVKTYGC…LPDALKRARA (121 aa). [4Fe-4S] cluster-binding residues include C31, C67, C105, C183, C187, and C190. The 235-residue stretch at 169-403 folds into the Radical SAM core domain; sequence RARGVTAFLT…LLVKQQRGFA (235 aa). The TRAM domain maps to 404-466; sequence EACVGREIDL…PNSLFAEMIG (63 aa).

Belongs to the methylthiotransferase family. MiaB subfamily. In terms of assembly, monomer. [4Fe-4S] cluster is required as a cofactor.

It is found in the cytoplasm. The enzyme catalyses N(6)-dimethylallyladenosine(37) in tRNA + (sulfur carrier)-SH + AH2 + 2 S-adenosyl-L-methionine = 2-methylsulfanyl-N(6)-dimethylallyladenosine(37) in tRNA + (sulfur carrier)-H + 5'-deoxyadenosine + L-methionine + A + S-adenosyl-L-homocysteine + 2 H(+). Functionally, catalyzes the methylthiolation of N6-(dimethylallyl)adenosine (i(6)A), leading to the formation of 2-methylthio-N6-(dimethylallyl)adenosine (ms(2)i(6)A) at position 37 in tRNAs that read codons beginning with uridine. The polypeptide is tRNA-2-methylthio-N(6)-dimethylallyladenosine synthase (Rhizobium meliloti (strain 1021) (Ensifer meliloti)).